The sequence spans 318 residues: Phosphoenolpyruvate transferase (318 aa).

Aspartate 50 serves as a coordination point for 7,8-didemethyl-8-hydroxy-5-deazariboflavin.

The protein belongs to the CofD family. As to quaternary structure, homodimer. It depends on Mg(2+) as a cofactor.

It carries out the reaction enolpyruvoyl-2-diphospho-5'-guanosine + 7,8-didemethyl-8-hydroxy-5-deazariboflavin = dehydro coenzyme F420-0 + GMP + H(+). The protein operates within cofactor biosynthesis; coenzyme F420 biosynthesis. Functionally, catalyzes the transfer of the phosphoenolpyruvate moiety from enoylpyruvoyl-2-diphospho-5'-guanosine (EPPG) to 7,8-didemethyl-8-hydroxy-5-deazariboflavin (FO) with the formation of dehydro coenzyme F420-0 and GMP. The chain is Phosphoenolpyruvate transferase from Streptomyces griseus subsp. griseus (strain JCM 4626 / CBS 651.72 / NBRC 13350 / KCC S-0626 / ISP 5235).